We begin with the raw amino-acid sequence, 207 residues long: Imidazole glycerol phosphate synthase subunit HisH (207 aa).

One can recognise a Glutamine amidotransferase type-1 domain in the interval 1 to 207 (MIGIIDYGMG…KRFGQLVEGN (207 aa)). The Nucleophile role is filled by cysteine 79. Active-site residues include histidine 185 and glutamate 187.

In terms of assembly, heterodimer of HisH and HisF.

Its subcellular location is the cytoplasm. The enzyme catalyses 5-[(5-phospho-1-deoxy-D-ribulos-1-ylimino)methylamino]-1-(5-phospho-beta-D-ribosyl)imidazole-4-carboxamide + L-glutamine = D-erythro-1-(imidazol-4-yl)glycerol 3-phosphate + 5-amino-1-(5-phospho-beta-D-ribosyl)imidazole-4-carboxamide + L-glutamate + H(+). It carries out the reaction L-glutamine + H2O = L-glutamate + NH4(+). It functions in the pathway amino-acid biosynthesis; L-histidine biosynthesis; L-histidine from 5-phospho-alpha-D-ribose 1-diphosphate: step 5/9. Its function is as follows. IGPS catalyzes the conversion of PRFAR and glutamine to IGP, AICAR and glutamate. The HisH subunit catalyzes the hydrolysis of glutamine to glutamate and ammonia as part of the synthesis of IGP and AICAR. The resulting ammonia molecule is channeled to the active site of HisF. This is Imidazole glycerol phosphate synthase subunit HisH from Shouchella clausii (strain KSM-K16) (Alkalihalobacillus clausii).